An 859-amino-acid chain; its full sequence is Leucine--tRNA ligase (859 aa).

A 'HIGH' region motif is present at residues 42–52 (PYPSGRLHMGH). The short motif at 618 to 622 (KMSKS) is the 'KMSKS' region element. An ATP-binding site is contributed by lysine 621.

This sequence belongs to the class-I aminoacyl-tRNA synthetase family.

Its subcellular location is the cytoplasm. It carries out the reaction tRNA(Leu) + L-leucine + ATP = L-leucyl-tRNA(Leu) + AMP + diphosphate. The polypeptide is Leucine--tRNA ligase (Shewanella oneidensis (strain ATCC 700550 / JCM 31522 / CIP 106686 / LMG 19005 / NCIMB 14063 / MR-1)).